A 607-amino-acid chain; its full sequence is MLSYQDKVGAFYKDNARANSSRLSLVTEDQGGRRPPYLLFVLLILLVGIMALLAITGVRFHQVSTSNMEFSRLLKEDMEKSEAVHHQVIDVLTPLFKIIGDEIGLRLPQKLNEIKQFILQKTNFFNPNREFDFRDLHWCINPPSKIKVNFTNYCDTIGIRKSIASAANPILLSALSRSRGDIFPPYRCSGATTSVGSVFPLSVSLSMSLISRTSEIINMLTAISDGVYGKTYLLVPDYLEGEFDTQKIRVFEIGFIKRWLNNMPLLQTTNYMVLPENSKAKVCTIAVGELTLASLCVDESTVLLYHDSNGSQGGILVVTLGIFGATPMDQVEEVIPVPHPSVEKIHITNHRGFIKDSIATWMVPALVSEKQEEQKNCLESACQRKSYPMCNQTSWEPFGGGQLPSYGRLTLPLDPSIDLQLNISFTYGPVILNGDGMDYYESPLLDSGWLTIPPKNGTVLGLINKASRGDQFTVIPHVLTFAPRESSGNCYLPIQTSQIMDKDVLTESNLVVLPTQNFIYVIATYDISRGDHAIVYYVYDPIRTISYTHAFRLTTKGRPDFLRIECFVWDDDLWCHQFYRFEADSTNSTTSVENLVRIRFSCNRSKP.

Residues M1–Y37 are Intravirion-facing. Residues L38–V58 form a helical membrane-spanning segment. Residues R59–P607 lie on the Virion surface side of the membrane. 7 N-linked (GlcNAc...) asparagine; by host glycosylation sites follow: N149, N309, N391, N422, N456, N587, and N603.

It belongs to the paramyxoviruses hemagglutinin-neuraminidase family. Non-sialidase subfamily. As to quaternary structure, binds canine SLAMF1 at the cell surface.

The protein resides in the virion membrane. Its subcellular location is the host cell membrane. Functionally, attaches the virus to cell receptors and thereby initiating infection. Binding of H protein to the receptor induces a conformational change that allows the F protein to trigger virion/cell membranes fusion. The cellular receptor might be SLAM, and may explain the lymphotropism of the virus. In Canine distemper virus (strain A92-27/4) (CDV), this protein is Hemagglutinin glycoprotein (H).